Consider the following 279-residue polypeptide: Undecaprenyl-diphosphatase (279 aa).

Helical transmembrane passes span phenylalanine 10–isoleucine 30, leucine 48–phenylalanine 68, leucine 96–leucine 116, glycine 128–isoleucine 148, serine 203–phenylalanine 223, isoleucine 229–isoleucine 249, and asparagine 259–leucine 279.

Belongs to the UppP family.

Its subcellular location is the cell inner membrane. The catalysed reaction is di-trans,octa-cis-undecaprenyl diphosphate + H2O = di-trans,octa-cis-undecaprenyl phosphate + phosphate + H(+). Its function is as follows. Catalyzes the dephosphorylation of undecaprenyl diphosphate (UPP). Confers resistance to bacitracin. In Prochlorococcus marinus (strain NATL1A), this protein is Undecaprenyl-diphosphatase.